The primary structure comprises 359 residues: MDLMSFKEKEISKKDCLELFEDTENFFDVIKLADSIRKDIVGDTVTYVVNANINFTNVCSGTCKFCAFKAEHGDPNAFFLNPDEVAKKALEARKIGATEVCIQGGLLKEIDTYFQAEILKKVKKITEPYEEIVVHAFSPMEVKSAAENAGLSVNEALKILKENGLNSMPGTAAEILNDEIRSEICPTKLKTSEWIDVVTNAHKTGIKTTCTMMYGHIEENKHLAEHLSILRKIQKETGGFTEFVPLTFLHENAPLHHMERVKSGASGMLDLKTYAISRIFFKDYIKNIQTSWVKLGTKLSQVSLNCGANDIGGTLMEESISKAAGGSYGTFMSEEKLKDMILAVGRIPKQRNTAYEIIE.

One can recognise a Radical SAM core domain in the interval 45–282 (VTYVVNANIN…TYAISRIFFK (238 aa)). [4Fe-4S] cluster contacts are provided by cysteine 59, cysteine 63, and cysteine 66.

The protein belongs to the radical SAM superfamily. CofH family. In terms of assembly, consists of two subunits, CofG and CofH. The cofactor is [4Fe-4S] cluster.

The catalysed reaction is 5-amino-6-(D-ribitylamino)uracil + L-tyrosine + S-adenosyl-L-methionine = 5-amino-5-(4-hydroxybenzyl)-6-(D-ribitylimino)-5,6-dihydrouracil + 2-iminoacetate + 5'-deoxyadenosine + L-methionine + H(+). Its pathway is cofactor biosynthesis; coenzyme F0 biosynthesis. Catalyzes the radical-mediated synthesis of 5-amino-5-(4-hydroxybenzyl)-6-(D-ribitylimino)-5,6-dihydrouracil from 5-amino-6-(D-ribitylamino)uracil and L-tyrosine. The chain is 5-amino-6-(D-ribitylamino)uracil--L-tyrosine 4-hydroxyphenyl transferase from Methanococcus maripaludis (strain C5 / ATCC BAA-1333).